The following is a 971-amino-acid chain: Protein ALWAYS EARLY 1 (971 aa).

The span at 1-11 (MAPTRKSKSVN) shows a compositional bias: basic residues. Disordered stretches follow at residues 1 to 40 (MAPTRKSKSVNKRFTNEASPDINFGSASKTKQRKKKLADK), 117 to 137 (SESEGEDHDASEVTRKHLKRK), 197 to 260 (IEDF…MFEN), 326 to 371 (GLLE…GLED), and 421 to 507 (PKES…KISL). Residues 40–98 (KLGPQWTKRELVRFYDAYRKYVGDWKKVAAAVRNNRSVEMVETLFCMNRAYLSLPEGTA) enclose the SANT domain. 3 stretches are compositionally biased toward basic and acidic residues: residues 209-219 (KQLDADDDASR), 332-350 (SSPHWEEERKTNNVDKKSN), and 424-440 (STQDKSLYTKESAEVDS). A compositionally biased stretch (polar residues) spans 450–470 (SSQGPAKQLKTAKTTVESSSA).

Expressed ubiquitously in vegetative and reproductive tissues.

Its subcellular location is the nucleus. This Arabidopsis thaliana (Mouse-ear cress) protein is Protein ALWAYS EARLY 1 (ALY1).